We begin with the raw amino-acid sequence, 452 residues long: MASCDEIKEHPRSLSMCGHVGFESLPDQLVDRSIEQGFCFNILCVGETGIGKSTLINTLFNTNFEELESSHFCPCVRLRAQTYELQESNVRLKLTIVNTVGFGDQINKEDSYQPIVDYIDDQFEAYLQEEVKIKRALFNYHDSRIHVCLYFIAPTGHSLRTLDLLTMKSLDNKVNIIPLIAKADTISKSELQKFKMKLMNELVINGVQIYQFPTDDDTTSKINGAMNGHLPFAVVGSMDEIKVGNKMVKGRQYPWGIVQVENENHCDFVKLREMLICTNMEDLREQTHMRHYELYRRCKLQEMGFVDMGPENKPLSLQETYEAKRHEFYGERQRKEEQMKQMFVQRVKEKEAILKEAERELQAKFEHLKRIHQEERMKLEEKRRMLEEESVAFAKKKATCELFPNQSFLASGSSIRKDKDRKKADGASAFCDCLTAQESVRLCISSPRKDMD.

The 267-residue stretch at 36 to 302 (QGFCFNILCV…ELYRRCKLQE (267 aa)) folds into the Septin-type G domain. Residues 46–53 (GETGIGKS) are G1 motif. Residues 46-53 (GETGIGKS), G101, 182-190 (KADTISKSE), G236, and R251 each bind GTP. Residues 98 to 101 (NTVG) form a G3 motif region. The G4 motif stretch occupies residues 181-184 (AKAD). S414 carries the post-translational modification Phosphoserine.

Belongs to the TRAFAC class TrmE-Era-EngA-EngB-Septin-like GTPase superfamily. Septin GTPase family. Septins polymerize into heterooligomeric protein complexes that form filaments, and can associate with cellular membranes, actin filaments and microtubules. GTPase activity is required for filament formation. Interacts with ADGB. In terms of processing, proteolytically cleaved in vitro in a calmodulin-dependent manner.

Its subcellular location is the cytoplasm. It is found in the cytoskeleton. The protein resides in the cell projection. The protein localises to the cilium. It localises to the flagellum. In terms of biological role, filament-forming cytoskeletal GTPase. May play a role in cytokinesis (Potential). This is Septin-10 from Mus musculus (Mouse).